A 520-amino-acid chain; its full sequence is Putative cytochrome P450 CYP13A3 (520 aa).

Cys464 contacts heme.

Belongs to the cytochrome P450 family. The cofactor is heme.

Functionally, cytochromes P450 are a group of heme-thiolate monooxygenases. They oxidize a variety of structurally unrelated compounds, including steroids, fatty acids, and xenobiotics. This Caenorhabditis elegans protein is Putative cytochrome P450 CYP13A3 (cyp-13A3).